Consider the following 263-residue polypeptide: Probable WRKY transcription factor 62 (263 aa).

The interval 59 to 104 (DHQDDQSNNSSPQDSSPVLESSRKPLHKRGRKTSMAESSDYHRHES) is disordered. Residues 64–74 (QSNNSSPQDSS) are compositionally biased toward low complexity. The segment at residues 104-174 (SSTPIYHDGF…GQHICQLHQA (71 aa)) is a DNA-binding region (WRKY).

It belongs to the WRKY group III family.

It localises to the nucleus. In terms of biological role, transcription factor. Interacts specifically with the W box (5'-(T)TGAC[CT]-3'), a frequently occurring elicitor-responsive cis-acting element. The protein is Probable WRKY transcription factor 62 (WRKY62) of Arabidopsis thaliana (Mouse-ear cress).